A 137-amino-acid chain; its full sequence is Ribosome-binding factor A (137 aa).

This sequence belongs to the RbfA family. As to quaternary structure, monomer. Binds 30S ribosomal subunits, but not 50S ribosomal subunits or 70S ribosomes.

It is found in the cytoplasm. Its function is as follows. One of several proteins that assist in the late maturation steps of the functional core of the 30S ribosomal subunit. Associates with free 30S ribosomal subunits (but not with 30S subunits that are part of 70S ribosomes or polysomes). Required for efficient processing of 16S rRNA. May interact with the 5'-terminal helix region of 16S rRNA. The chain is Ribosome-binding factor A from Cereibacter sphaeroides (strain KD131 / KCTC 12085) (Rhodobacter sphaeroides).